The sequence spans 712 residues: Eukaryotic translation initiation factor 3 subunit B (712 aa).

Positions 1 to 98 are sufficient for interaction with HCR1 and TIF32; sequence MSLTEAEYHE…LFVQFETSEM (98 aa). Residues 1-224 form a sufficient for interaction with PIC8 region; that stretch reads MSLTEAEYHE…GVQSWGGADF (224 aa). Residues 37-124 enclose the RRM domain; the sequence is NYVVVDGAPI…HRLLVNRLSD (88 aa). 7 WD repeats span residues 191–229, 230–293, 301–339, 342–384, 452–493, 513–555, and 566–604; these read RKFFTSKYAKFSPKGTYLFSIHPQGVQSWGGADFSSIDK, FMHN…RTFA, QKEMPWPLVKWSHDDKYCARQGPGALAVYETPSFQLLDK, IKID…QTAR, ELKE…DFYA, ITDK…SNKN, and DKFSGMTNISWDPSGRFVATWSSSWLHTIENGYKLYEFT.

This sequence belongs to the eIF-3 subunit B family. In terms of assembly, component of the eukaryotic translation initiation factor 3 (eIF-3) complex.

It is found in the cytoplasm. In terms of biological role, RNA-binding component of the eukaryotic translation initiation factor 3 (eIF-3) complex, which is involved in protein synthesis of a specialized repertoire of mRNAs and, together with other initiation factors, stimulates binding of mRNA and methionyl-tRNAi to the 40S ribosome. The eIF-3 complex specifically targets and initiates translation of a subset of mRNAs involved in cell proliferation. The protein is Eukaryotic translation initiation factor 3 subunit B of Scheffersomyces stipitis (strain ATCC 58785 / CBS 6054 / NBRC 10063 / NRRL Y-11545) (Yeast).